Reading from the N-terminus, the 72-residue chain is DNA-directed RNA polymerase subunit omega (72 aa).

It belongs to the RNA polymerase subunit omega family. The RNAP catalytic core consists of 2 alpha, 1 beta, 1 beta' and 1 omega subunit. When a sigma factor is associated with the core the holoenzyme is formed, which can initiate transcription.

It carries out the reaction RNA(n) + a ribonucleoside 5'-triphosphate = RNA(n+1) + diphosphate. In terms of biological role, promotes RNA polymerase assembly. Latches the N- and C-terminal regions of the beta' subunit thereby facilitating its interaction with the beta and alpha subunits. This is DNA-directed RNA polymerase subunit omega from Clostridium beijerinckii (strain ATCC 51743 / NCIMB 8052) (Clostridium acetobutylicum).